The primary structure comprises 377 residues: UDP-N-acetylglucosamine--N-acetylmuramyl-(pentapeptide) pyrophosphoryl-undecaprenol N-acetylglucosamine transferase (377 aa).

Residues 29-31, Asn-142, Arg-179, Ser-213, and Gln-308 each bind UDP-N-acetyl-alpha-D-glucosamine; that span reads TAG.

This sequence belongs to the glycosyltransferase 28 family. MurG subfamily.

The protein localises to the cell membrane. The catalysed reaction is di-trans,octa-cis-undecaprenyl diphospho-N-acetyl-alpha-D-muramoyl-L-alanyl-D-glutamyl-meso-2,6-diaminopimeloyl-D-alanyl-D-alanine + UDP-N-acetyl-alpha-D-glucosamine = di-trans,octa-cis-undecaprenyl diphospho-[N-acetyl-alpha-D-glucosaminyl-(1-&gt;4)]-N-acetyl-alpha-D-muramoyl-L-alanyl-D-glutamyl-meso-2,6-diaminopimeloyl-D-alanyl-D-alanine + UDP + H(+). It functions in the pathway cell wall biogenesis; peptidoglycan biosynthesis. In terms of biological role, cell wall formation. Catalyzes the transfer of a GlcNAc subunit on undecaprenyl-pyrophosphoryl-MurNAc-pentapeptide (lipid intermediate I) to form undecaprenyl-pyrophosphoryl-MurNAc-(pentapeptide)GlcNAc (lipid intermediate II). This is UDP-N-acetylglucosamine--N-acetylmuramyl-(pentapeptide) pyrophosphoryl-undecaprenol N-acetylglucosamine transferase from Saccharopolyspora erythraea (strain ATCC 11635 / DSM 40517 / JCM 4748 / NBRC 13426 / NCIMB 8594 / NRRL 2338).